Reading from the N-terminus, the 76-residue chain is Antimicrobial peptide Smp24 (76 aa).

The N-terminal stretch at 1-22 (MQYKTFLVIFMAYLLVTHEAEA) is a signal peptide. The propeptide occupies 47–76 (SKRKRDVEDFFDPYQRDLDLELERLLSQLQ).

This sequence belongs to the non-disulfide-bridged peptide (NDBP) superfamily. Medium-length antimicrobial peptide (group 3) family. Expressed by the venom gland.

The protein localises to the secreted. It localises to the target cell membrane. Its function is as follows. Peptide that shows antimicrobial activity, moderate cytolysis on eukaryote cells and interference with DNA synthesis. Has potent activity against Gram-positive bacteria and moderate activity against Gram-negative bacteria, as well as moderate activity against fungi. Acts by inducing bacterial membrane disruption. Uses multiple modes of action depending on the membrane lipid composition. Uses a toroidal pore mechanism against the prokaryotic like membrane and forms hexagonal phase non-lamellar structures in eukaryotic-like membrane. Shows activity against B.subtilis (MIC=4 ug/ml), S.epidermidis (MIC=8 ug/ml), S.aureus (MIC=8 ug/ml), E.coli (MIC=64 ug/ml), K.pneumoniae (MIC=128 ug/ml), P.aeruginosa (MIC=256 ug/ml), and C.albicans (MIC=32 ug/ml). Shows moderate hemolysis activity. In Scorpio palmatus (Israeli golden scorpion), this protein is Antimicrobial peptide Smp24.